The chain runs to 242 residues: ATP synthase subunit a (242 aa).

The next 6 membrane-spanning stretches (helical) occupy residues 29–49 (SSIY…LAFY), 84–104 (FIPL…LGMT), 114–134 (IIVT…VGFV), 140–160 (FLTL…MIVI), 189–209 (VIAG…IPLM), and 210–230 (MILI…FTIL).

Belongs to the ATPase A chain family. As to quaternary structure, F-type ATPases have 2 components, CF(1) - the catalytic core - and CF(0) - the membrane proton channel. CF(1) has five subunits: alpha(3), beta(3), gamma(1), delta(1), epsilon(1). CF(0) has three main subunits: a(1), b(2) and c(9-12). The alpha and beta chains form an alternating ring which encloses part of the gamma chain. CF(1) is attached to CF(0) by a central stalk formed by the gamma and epsilon chains, while a peripheral stalk is formed by the delta and b chains.

The protein resides in the cell inner membrane. Key component of the proton channel; it plays a direct role in the translocation of protons across the membrane. The sequence is that of ATP synthase subunit a from Rickettsia massiliae (strain Mtu5).